We begin with the raw amino-acid sequence, 121 residues long: Large ribosomal subunit protein bL20 (121 aa).

This sequence belongs to the bacterial ribosomal protein bL20 family.

Its function is as follows. Binds directly to 23S ribosomal RNA and is necessary for the in vitro assembly process of the 50S ribosomal subunit. It is not involved in the protein synthesizing functions of that subunit. The chain is Large ribosomal subunit protein bL20 from Petrotoga mobilis (strain DSM 10674 / SJ95).